The sequence spans 149 residues: Ribosome-binding factor A (149 aa).

This sequence belongs to the RbfA family. In terms of assembly, monomer. Binds 30S ribosomal subunits, but not 50S ribosomal subunits or 70S ribosomes.

Its subcellular location is the cytoplasm. Functionally, one of several proteins that assist in the late maturation steps of the functional core of the 30S ribosomal subunit. Associates with free 30S ribosomal subunits (but not with 30S subunits that are part of 70S ribosomes or polysomes). Required for efficient processing of 16S rRNA. May interact with the 5'-terminal helix region of 16S rRNA. The sequence is that of Ribosome-binding factor A from Caulobacter vibrioides (strain ATCC 19089 / CIP 103742 / CB 15) (Caulobacter crescentus).